We begin with the raw amino-acid sequence, 202 residues long: Na(+)-translocating NADH-quinone reductase subunit E (202 aa).

A run of 6 helical transmembrane segments spans residues 11 to 31 (AIFVENMALAFFLGMCTFLAI), 35 to 55 (IEAATGLGIAVVVVLTVTVPV), 81 to 101 (FLGLLTYIGVIAAIVQIMEMV), 114 to 134 (GVFLPLITVNCAILGASLFMV), 144 to 164 (LVYGFGAGVGWALAIIALAGI), and 180 to 200 (LGITFITVGLMSLGFMSFSGI).

It belongs to the NqrDE/RnfAE family. As to quaternary structure, composed of six subunits; NqrA, NqrB, NqrC, NqrD, NqrE and NqrF.

The protein resides in the cell inner membrane. The enzyme catalyses a ubiquinone + n Na(+)(in) + NADH + H(+) = a ubiquinol + n Na(+)(out) + NAD(+). Functionally, NQR complex catalyzes the reduction of ubiquinone-1 to ubiquinol by two successive reactions, coupled with the transport of Na(+) ions from the cytoplasm to the periplasm. NqrA to NqrE are probably involved in the second step, the conversion of ubisemiquinone to ubiquinol. In Marinobacter nauticus (strain ATCC 700491 / DSM 11845 / VT8) (Marinobacter aquaeolei), this protein is Na(+)-translocating NADH-quinone reductase subunit E.